The following is a 470-amino-acid chain: tRNA modification GTPase MnmE (470 aa).

3 residues coordinate (6S)-5-formyl-5,6,7,8-tetrahydrofolate: Arg-24, Glu-81, and Lys-122. Positions 218-383 constitute a TrmE-type G domain; that stretch reads GIKIVIAGKP…LQEYLSNNIK (166 aa). Residue Asn-228 coordinates K(+). GTP contacts are provided by residues 228 to 233, 247 to 253, and 272 to 275; these read NAGKSS, STISGTT, and DTAG. Residue Ser-232 participates in Mg(2+) binding. Residues Ser-247, Ile-249, and Thr-252 each coordinate K(+). Thr-253 lines the Mg(2+) pocket. Position 470 (Lys-470) interacts with (6S)-5-formyl-5,6,7,8-tetrahydrofolate.

Belongs to the TRAFAC class TrmE-Era-EngA-EngB-Septin-like GTPase superfamily. TrmE GTPase family. Homodimer. Heterotetramer of two MnmE and two MnmG subunits. K(+) serves as cofactor.

The protein resides in the cytoplasm. Functionally, exhibits a very high intrinsic GTPase hydrolysis rate. Involved in the addition of a carboxymethylaminomethyl (cmnm) group at the wobble position (U34) of certain tRNAs, forming tRNA-cmnm(5)s(2)U34. This chain is tRNA modification GTPase MnmE, found in Blochmanniella pennsylvanica (strain BPEN).